We begin with the raw amino-acid sequence, 60 residues long: Large ribosomal subunit protein uL30 (60 aa).

Belongs to the universal ribosomal protein uL30 family. Part of the 50S ribosomal subunit.

The polypeptide is Large ribosomal subunit protein uL30 (Mycobacteroides abscessus (strain ATCC 19977 / DSM 44196 / CCUG 20993 / CIP 104536 / JCM 13569 / NCTC 13031 / TMC 1543 / L948) (Mycobacterium abscessus)).